Consider the following 1858-residue polypeptide: Inactive histone-lysine N-methyltransferase 2E (1858 aa).

The HCFC1-binding motif (HBM) motif lies at 63–66; it reads DHNY. The segment at 118–166 adopts a PHD-type zinc-finger fold; that stretch reads VTRCICGFTHDDGYMICCDKCSVWQHIDCMGIDRQHIPDTYLCERCQPR. Residues Cys121, Cys123, Cys135, Cys138, His143, Cys146, Cys160, and Cys163 each coordinate Zn(2+). The segment at 217–269 is disordered; sequence ASRVSKVNDKRRKKSGEKEQHISKCKKAFREGSRKSSRVKGSAPEIDPSSDGS. Over residues 232–250 the composition is skewed to basic and acidic residues; sequence GEKEQHISKCKKAFREGSR. Positions 330 to 447 constitute an SET domain; it reads PPVESHIQKN…KGTEITIAFD (118 aa). Ser435 is a glycosylation site (O-linked (GlcNAc) serine). O-linked (GlcNAc) threonine glycosylation occurs at Thr440. The segment at 475 to 530 is disordered; the sequence is SESMENINSGYETRRKKGKKDKDISKEKDTQNQNITLDCEGTTNKMKSPETKQRKL. The span at 494 to 504 shows a compositional bias: basic and acidic residues; the sequence is KDKDISKEKDT. Positions 505-520 are enriched in polar residues; the sequence is QNQNITLDCEGTTNKM. The stretch at 559 to 615 forms a coiled coil; it reads VEMESEEQIAERKRKMTREERKMEAILQAFARLEKREKRREQALERISTAKTEVKTE. Phosphoserine is present on Ser623. Residues 630–687 form a disordered region; that stretch reads EQAKEENASKPTPAKVNRTKQRKSFSRSRTHIGQQRRRHRTVSMCSDIQPSSPDIEVT. Positions 646–670 are enriched in basic residues; sequence NRTKQRKSFSRSRTHIGQQRRRHRT. Positions 672-687 are enriched in polar residues; that stretch reads SMCSDIQPSSPDIEVT. Phosphoserine is present on residues Ser837 and Ser845. Composition is skewed to low complexity over residues 887-901 and 933-957; these read TSTP…PTHT and PVTP…PESS. Disordered stretches follow at residues 887–960 and 1039–1068; these read TSTP…SPEI and LETP…SSWV. Over residues 1039-1048 the composition is skewed to basic and acidic residues; it reads LETPAHDRAE. Polar residues predominate over residues 1049 to 1068; that stretch reads PNSQLDSTHSGRGTMYSSWV. Ser1070 is subject to Phosphoserine. Disordered regions lie at residues 1164–1561 and 1581–1835; these read KRQR…QNQQ and VFTS…PVPG. Composition is skewed to polar residues over residues 1186 to 1206 and 1222 to 1235; these read PHAS…NDNG and TVYN…SNNC. At Ser1273 the chain carries Phosphoserine. Residues 1273–1282 are compositionally biased toward basic and acidic residues; it reads SDHRKDKDSG. Composition is skewed to low complexity over residues 1285–1303 and 1349–1362; these read SPCV…SSHS and KSPP…SPGS. The residue at position 1359 (Ser1359) is a Phosphoserine. 2 stretches are compositionally biased toward polar residues: residues 1400–1432 and 1506–1542; these read QQKQ…SQKL and LPAN…LNST. Residues 1543 to 1553 are compositionally biased toward pro residues; the sequence is APPPPPPPPPS. The segment covering 1581–1599 has biased composition (polar residues); that stretch reads VFTSGPNQALPGTTSQQTV. A compositionally biased stretch (pro residues) spans 1626 to 1637; it reads VPPPPPPPPAPG. Residues 1642 to 1651 are compositionally biased toward polar residues; that stretch reads QQPNSHQQHS. The segment covering 1677 to 1687 has biased composition (pro residues); the sequence is LPPPPPPPGPA. The segment covering 1698-1711 has biased composition (polar residues); the sequence is TGLQGLQAQHQHVV. The segment covering 1714–1724 has biased composition (pro residues); it reads APPPPPPPPPS. Residues 1798–1808 are compositionally biased toward polar residues; sequence QGPNSIPTPTA.

This sequence belongs to the class V-like SAM-binding methyltransferase superfamily. Histone-lysine methyltransferase family. TRX/MLL subfamily. As to quaternary structure, component of a complex composed of KMT2E (isoform 3), OGT and USP7; the complex stabilizes KMT2E, preventing KMT2E ubiquitination and proteasomal-mediated degradation. Isoform 3 interacts (via N-terminus) with OGT (via TRP repeats). Isoform 3 interacts with deubiquitinating enzyme USP7 (via MATH domain). Isoform 3 interacts (via HBM motif) with HCFC1 (via Kelch domain). Isoform 3 interacts with E2F1; the interaction is probably indirect and is mediated via HCFC1. Ubiquitinated. Deubiquitinated by USP7. In terms of processing, O-glycosylated at Ser-435 and Thr-440 in the SET domain by OGT which probably prevents KMT2E proteasomal-mediated degradation. As to expression, widely expressed in both adult and fetal tissues. Highest levels of expression observed in fetal thymus and kidney and in adult hematopoietic tissues, jejunum and cerebellum. Isoform NKp44L: Not detected on circulating cells from healthy individuals, but is expressed on a large panel of tumor and transformed cells.

The protein resides in the chromosome. The protein localises to the cytoplasm. It localises to the cytoskeleton. It is found in the microtubule organizing center. Its subcellular location is the centrosome. The protein resides in the nucleus speckle. The protein localises to the nucleus. It localises to the nucleoplasm. It is found in the cell membrane. Associates with chromatin regions downstream of transcriptional start sites of active genes and thus regulates gene transcription. Chromatin interaction is mediated via the binding to tri-methylated histone H3 at 'Lys-4' (H3K4me3). Key regulator of hematopoiesis involved in terminal myeloid differentiation and in the regulation of hematopoietic stem cell (HSCs) self-renewal by a mechanism that involves DNA methylation. Also acts as an important cell cycle regulator, participating in cell cycle regulatory network machinery at multiple cell cycle stages including G1/S transition, S phase progression and mitotic entry. Recruited to E2F1 responsive promoters by HCFC1 where it stimulates tri-methylation of histone H3 at 'Lys-4' and transcriptional activation and thereby facilitates G1 to S phase transition. During myoblast differentiation, required to suppress inappropriate expression of S-phase-promoting genes and maintain expression of determination genes in quiescent cells. Its function is as follows. Cellular ligand for NCR2/NKp44, may play a role as a danger signal in cytotoxicity and NK-cell-mediated innate immunity. The polypeptide is Inactive histone-lysine N-methyltransferase 2E (KMT2E) (Homo sapiens (Human)).